A 635-amino-acid polypeptide reads, in one-letter code: Membrane protein insertase YidC (635 aa).

Residues 8–28 (LILAMVLSALVMLVWSIFFAP) form a helical membrane-spanning segment. Residues 33–61 (PAQDTPAASTQGTAQPEAGGPATPGAVPQ) are disordered. A run of 4 helical transmembrane segments spans residues 396–416 (MIGNMGWAIIALTFVLKLLVF), 470–490 (LPVLLQIPIFFALYKVIFVTI), 528–548 (SFLHSFTLPVLAILLGVSMWM), and 564–584 (IFAWMPWVFMFMLGGFASGLV). The tract at residues 615–635 (IRSSLPSRAKAGDKGGDKGGK) is disordered. The segment covering 624 to 635 (KAGDKGGDKGGK) has biased composition (basic and acidic residues).

The protein belongs to the OXA1/ALB3/YidC family. Type 1 subfamily. In terms of assembly, interacts with the Sec translocase complex via SecD. Specifically interacts with transmembrane segments of nascent integral membrane proteins during membrane integration.

It is found in the cell inner membrane. Functionally, required for the insertion and/or proper folding and/or complex formation of integral membrane proteins into the membrane. Involved in integration of membrane proteins that insert both dependently and independently of the Sec translocase complex, as well as at least some lipoproteins. Aids folding of multispanning membrane proteins. This is Membrane protein insertase YidC from Paracoccus denitrificans (strain Pd 1222).